A 513-amino-acid chain; its full sequence is Butyrophilin subfamily 3 member A1 (513 aa).

The signal sequence occupies residues 1–29 (MKMASFLAFLLLNFRVCLLLLQLLMPHSA). 2 consecutive Ig-like V-type domains span residues 30–139 (QFSV…KALV) and 145–236 (ALGS…ASIS). Residues 30-254 (QFSVLGPSGP…AQRWIAALAG (225 aa)) lie on the Extracellular side of the membrane. Intrachain disulfides connect Cys52–Cys126 and Cys166–Cys220. N-linked (GlcNAc...) asparagine glycosylation occurs at Asn115. Residues 255–271 (TLPVLLLLLGGAGYFLW) traverse the membrane as a helical segment. At 272–513 (QQQEEKKTQF…EPTALTICPA (242 aa)) the chain is on the cytoplasmic side. The 192-residue stretch at 322–513 (RGERHSAYNE…EPTALTICPA (192 aa)) folds into the B30.2/SPRY domain.

The protein belongs to the immunoglobulin superfamily. BTN/MOG family. In terms of assembly, homodimer. Post-translationally, N-glycosylated. In terms of tissue distribution, detected on T-cells, natural killer cells, dendritic cells and macrophages (at protein level). Ubiquitous. Highly expressed in heart, pancreas and lung, Moderately expressed in placenta, liver and muscle.

It is found in the cell membrane. Its function is as follows. Plays a role in T-cell activation and in the adaptive immune response. Regulates the proliferation of activated T-cells. Regulates the release of cytokines and IFNG by activated T-cells. Mediates the response of T-cells toward infected and transformed cells that are characterized by high levels of phosphorylated metabolites, such as isopentenyl pyrophosphate. The chain is Butyrophilin subfamily 3 member A1 (BTN3A1) from Homo sapiens (Human).